Here is a 309-residue protein sequence, read N- to C-terminus: MSQVGSAGEGSNSMAAAPPPRLLLLVVLLLVPVSNAIYCEEDDCYDLLGVKQDANVSEIKKAYYKLSLKHHPDKNPDPESRKLFVKIANAYEILKDESTRGQYDYAIAHPEEVFYNTAQYYRAYYGHKTDPRAVLIGLLLIISAFQYLNQFGRYSKAIETVKQTPAYKNRLKALEFERTGGISSKKKGHKQMDKKVEEVLSNEVELQIQGVEKPSLWRLYGVQFILLPYSIGKVLSWKFCWFWRYRIKKLPYAWEDACYLTRMSLKIPANTWENIDDYRKENLVMKRLWEKNNMERYIAEMRKESKRRR.

Positions 1–36 are cleaved as a signal peptide; that stretch reads MSQVGSAGEGSNSMAAAPPPRLLLLVVLLLVPVSNA. Residues 37–130 lie on the Lumenal side of the membrane; sequence IYCEEDDCYD…YRAYYGHKTD (94 aa). One can recognise a J domain in the interval 43–107; it reads DCYDLLGVKQ…STRGQYDYAI (65 aa). Asparagine 55 carries an N-linked (GlcNAc...) asparagine glycan. Residues 131–151 form a helical membrane-spanning segment; that stretch reads PRAVLIGLLLIISAFQYLNQF. Over 152–219 the chain is Cytoplasmic; the sequence is GRYSKAIETV…GVEKPSLWRL (68 aa). A helical transmembrane segment spans residues 220-242; that stretch reads YGVQFILLPYSIGKVLSWKFCWF. Residues 243–309 are Lumenal-facing; the sequence is WRYRIKKLPY…EMRKESKRRR (67 aa).

It is found in the endoplasmic reticulum membrane. In terms of biological role, may play a role in protein folding in the endoplasmic reticulum. The protein is DnaJ protein ERDJ7 of Oryza sativa subsp. japonica (Rice).